The following is a 259-amino-acid chain: 3-deoxy-manno-octulosonate cytidylyltransferase (259 aa).

Belongs to the KdsB family.

The protein localises to the cytoplasm. The catalysed reaction is 3-deoxy-alpha-D-manno-oct-2-ulosonate + CTP = CMP-3-deoxy-beta-D-manno-octulosonate + diphosphate. Its pathway is nucleotide-sugar biosynthesis; CMP-3-deoxy-D-manno-octulosonate biosynthesis; CMP-3-deoxy-D-manno-octulosonate from 3-deoxy-D-manno-octulosonate and CTP: step 1/1. The protein operates within bacterial outer membrane biogenesis; lipopolysaccharide biosynthesis. Functionally, activates KDO (a required 8-carbon sugar) for incorporation into bacterial lipopolysaccharide in Gram-negative bacteria. In Actinobacillus succinogenes (strain ATCC 55618 / DSM 22257 / CCUG 43843 / 130Z), this protein is 3-deoxy-manno-octulosonate cytidylyltransferase.